Consider the following 93-residue polypeptide: WAP four-disulfide core domain protein 13 (93 aa).

An N-terminal signal peptide occupies residues 1–22 (MKPVLPLQFLVVFCLALQLVPG). The 50-residue stretch at 24-73 (PKQRVLKYILEPPPCISAPENCTHLCTMQEDCEKGFQCCSSFCGIVCSSE) folds into the WAP; atypical domain. 3 disulfide bridges follow: Cys-45–Cys-66, Cys-49–Cys-61, and Cys-55–Cys-70.

It localises to the secreted. Its function is as follows. Putative acid-stable proteinase inhibitor. This is WAP four-disulfide core domain protein 13 (WFDC13) from Homo sapiens (Human).